We begin with the raw amino-acid sequence, 181 residues long: Lipoprotein signal peptidase (181 aa).

The next 3 membrane-spanning stretches (helical) occupy residues 25–45, 86–106, and 107–127; these read LFYK…QVFI, LVYF…VFMV, and KYSY…NFFD. Residues Asp138 and Asp153 contribute to the active site. The chain crosses the membrane as a helical span at residues 149-169; it reads FNFADCCITFGFIGLFFCFLI.

This sequence belongs to the peptidase A8 family.

It localises to the cell membrane. It carries out the reaction Release of signal peptides from bacterial membrane prolipoproteins. Hydrolyzes -Xaa-Yaa-Zaa-|-(S,diacylglyceryl)Cys-, in which Xaa is hydrophobic (preferably Leu), and Yaa (Ala or Ser) and Zaa (Gly or Ala) have small, neutral side chains.. The protein operates within protein modification; lipoprotein biosynthesis (signal peptide cleavage). In terms of biological role, this protein specifically catalyzes the removal of signal peptides from prolipoproteins. The protein is Lipoprotein signal peptidase of Mycoplasma genitalium (strain ATCC 33530 / DSM 19775 / NCTC 10195 / G37) (Mycoplasmoides genitalium).